A 370-amino-acid chain; its full sequence is 3-isopropylmalate dehydrogenase (370 aa).

77–90 contributes to the NAD(+) binding site; sequence GPKWDSVPYEVRPE. 4 residues coordinate substrate: Arg-97, Arg-107, Arg-135, and Asp-226. Residues Asp-226, Asp-250, and Asp-254 each coordinate Mg(2+). 290–302 provides a ligand contact to NAD(+); that stretch reads GSAPDIAGKGIAN.

Belongs to the isocitrate and isopropylmalate dehydrogenases family. LeuB type 1 subfamily. Homodimer. It depends on Mg(2+) as a cofactor. The cofactor is Mn(2+).

Its subcellular location is the cytoplasm. It carries out the reaction (2R,3S)-3-isopropylmalate + NAD(+) = 4-methyl-2-oxopentanoate + CO2 + NADH. Its pathway is amino-acid biosynthesis; L-leucine biosynthesis; L-leucine from 3-methyl-2-oxobutanoate: step 3/4. Catalyzes the oxidation of 3-carboxy-2-hydroxy-4-methylpentanoate (3-isopropylmalate) to 3-carboxy-4-methyl-2-oxopentanoate. The product decarboxylates to 4-methyl-2 oxopentanoate. The chain is 3-isopropylmalate dehydrogenase from Rhizobium etli (strain ATCC 51251 / DSM 11541 / JCM 21823 / NBRC 15573 / CFN 42).